A 333-amino-acid polypeptide reads, in one-letter code: MFNLKNRNFLTLMDFTPKEINYFLDLARDLKRAKYTGTEVQRMKGKNIALIFEKASTRTRCAFEVGAKDQGAHVTYLGPTGSHIGKKESAADTARVLGRMYDGIEYRGFGQEIVETLAEYAGVPVWNGLTDEDHPTQILADFLTIREHFNKPLNEIKFAYVGDGANNMANALMIGAVKMGMDFRIVSPKEIPTDAALVAKCKEIAAETGAKVTITDNIEEGVKGCDVLYTDVWVSMGEPDSVWESKIKLLTPYRVDMNMIKMTGNPDAKFMHCLPAFHDEETAVGKEIKEKYGLSEMEVSHELFESKYSIVFDEAENRMHTIKAVMVATLGDQ.

Carbamoyl phosphate is bound by residues 56 to 59, R107, and 134 to 137; these read STRT and HPTQ. L-ornithine-binding positions include N167, D231, and 235 to 236; that span reads SM. Residues 273–274 and R318 contribute to the carbamoyl phosphate site; that span reads CL.

The protein belongs to the aspartate/ornithine carbamoyltransferase superfamily. OTCase family.

Its subcellular location is the cytoplasm. It catalyses the reaction carbamoyl phosphate + L-ornithine = L-citrulline + phosphate + H(+). It participates in amino-acid degradation; L-arginine degradation via ADI pathway; carbamoyl phosphate from L-arginine: step 2/2. Reversibly catalyzes the transfer of the carbamoyl group from carbamoyl phosphate (CP) to the N(epsilon) atom of ornithine (ORN) to produce L-citrulline. The chain is Ornithine carbamoyltransferase from Clostridium botulinum (strain 657 / Type Ba4).